A 288-amino-acid chain; its full sequence is Elongation factor Ts (288 aa).

Residues 80-83 (TDFL) form an involved in Mg(2+) ion dislocation from EF-Tu region.

It belongs to the EF-Ts family.

It is found in the cytoplasm. In terms of biological role, associates with the EF-Tu.GDP complex and induces the exchange of GDP to GTP. It remains bound to the aminoacyl-tRNA.EF-Tu.GTP complex up to the GTP hydrolysis stage on the ribosome. The polypeptide is Elongation factor Ts (Pseudomonas fluorescens (strain ATCC BAA-477 / NRRL B-23932 / Pf-5)).